The sequence spans 448 residues: Glutamyl-tRNA reductase (448 aa).

Residues 52 to 55 (TCNR), Ser-105, 110 to 112 (EDQ), and Gln-116 contribute to the substrate site. Cys-53 acts as the Nucleophile in catalysis. 184–189 (GAGEMG) contacts NADP(+). Residues 406 to 435 (DPDFGGPDQATPPEFTKGMSVEDIPDGMRD) are disordered.

This sequence belongs to the glutamyl-tRNA reductase family. In terms of assembly, homodimer.

The catalysed reaction is (S)-4-amino-5-oxopentanoate + tRNA(Glu) + NADP(+) = L-glutamyl-tRNA(Glu) + NADPH + H(+). The protein operates within porphyrin-containing compound metabolism; protoporphyrin-IX biosynthesis; 5-aminolevulinate from L-glutamyl-tRNA(Glu): step 1/2. Its function is as follows. Catalyzes the NADPH-dependent reduction of glutamyl-tRNA(Glu) to glutamate 1-semialdehyde (GSA). The protein is Glutamyl-tRNA reductase of Haloarcula marismortui (strain ATCC 43049 / DSM 3752 / JCM 8966 / VKM B-1809) (Halobacterium marismortui).